We begin with the raw amino-acid sequence, 59 residues long: UPF0391 membrane protein AZC_4184 (59 aa).

Transmembrane regions (helical) follow at residues 4 to 24 and 30 to 50; these read WALTFLVVAIIAAVLGFTAVA and IAKIIFYVAIVLFLISAVMGF.

The protein belongs to the UPF0391 family.

It is found in the cell membrane. This chain is UPF0391 membrane protein AZC_4184, found in Azorhizobium caulinodans (strain ATCC 43989 / DSM 5975 / JCM 20966 / LMG 6465 / NBRC 14845 / NCIMB 13405 / ORS 571).